The following is a 121-amino-acid chain: Ribosome-binding factor A (121 aa).

Belongs to the RbfA family. As to quaternary structure, monomer. Binds 30S ribosomal subunits, but not 50S ribosomal subunits or 70S ribosomes.

The protein resides in the cytoplasm. In terms of biological role, one of several proteins that assist in the late maturation steps of the functional core of the 30S ribosomal subunit. Associates with free 30S ribosomal subunits (but not with 30S subunits that are part of 70S ribosomes or polysomes). Required for efficient processing of 16S rRNA. May interact with the 5'-terminal helix region of 16S rRNA. The sequence is that of Ribosome-binding factor A from Clostridium tetani (strain Massachusetts / E88).